The primary structure comprises 211 residues: Histidine biosynthesis bifunctional protein HisIE (211 aa).

Residues 1 to 107 (MNKLIDFSKG…FNSEIESRFK (107 aa)) form a phosphoribosyl-AMP cyclohydrolase region. The segment at 108–211 (IQALAQTIHQ…KGERKEVREW (104 aa)) is phosphoribosyl-ATP pyrophosphohydrolase.

In the N-terminal section; belongs to the PRA-CH family. The protein in the C-terminal section; belongs to the PRA-PH family.

Its subcellular location is the cytoplasm. The catalysed reaction is 1-(5-phospho-beta-D-ribosyl)-ATP + H2O = 1-(5-phospho-beta-D-ribosyl)-5'-AMP + diphosphate + H(+). It catalyses the reaction 1-(5-phospho-beta-D-ribosyl)-5'-AMP + H2O = 1-(5-phospho-beta-D-ribosyl)-5-[(5-phospho-beta-D-ribosylamino)methylideneamino]imidazole-4-carboxamide. It functions in the pathway amino-acid biosynthesis; L-histidine biosynthesis; L-histidine from 5-phospho-alpha-D-ribose 1-diphosphate: step 2/9. The protein operates within amino-acid biosynthesis; L-histidine biosynthesis; L-histidine from 5-phospho-alpha-D-ribose 1-diphosphate: step 3/9. The protein is Histidine biosynthesis bifunctional protein HisIE of Staphylococcus epidermidis (strain ATCC 35984 / DSM 28319 / BCRC 17069 / CCUG 31568 / BM 3577 / RP62A).